The primary structure comprises 241 residues: Demethylmenaquinone methyltransferase (241 aa).

Residues T60, D81, and 106–107 (DA) each bind S-adenosyl-L-methionine.

This sequence belongs to the class I-like SAM-binding methyltransferase superfamily. MenG/UbiE family.

It carries out the reaction a 2-demethylmenaquinol + S-adenosyl-L-methionine = a menaquinol + S-adenosyl-L-homocysteine + H(+). Its pathway is quinol/quinone metabolism; menaquinone biosynthesis; menaquinol from 1,4-dihydroxy-2-naphthoate: step 2/2. Functionally, methyltransferase required for the conversion of demethylmenaquinol (DMKH2) to menaquinol (MKH2). In Staphylococcus carnosus (strain TM300), this protein is Demethylmenaquinone methyltransferase.